Consider the following 341-residue polypeptide: tRNA (cytidine(56)-2'-O)-methyltransferase (341 aa).

S-adenosyl-L-methionine contacts are provided by residues L79 and 104–108 (GAEKV). Residues 187 to 294 (IIRHVETVYK…VAHADNLVSM (108 aa)) form the HD domain.

The protein belongs to the aTrm56 family. In terms of assembly, homodimer.

The protein localises to the cytoplasm. It catalyses the reaction cytidine(56) in tRNA + S-adenosyl-L-methionine = 2'-O-methylcytidine(56) in tRNA + S-adenosyl-L-homocysteine + H(+). In terms of biological role, specifically catalyzes the AdoMet-dependent 2'-O-ribose methylation of cytidine at position 56 in tRNAs. The protein is tRNA (cytidine(56)-2'-O)-methyltransferase of Picrophilus torridus (strain ATCC 700027 / DSM 9790 / JCM 10055 / NBRC 100828 / KAW 2/3).